The primary structure comprises 191 residues: Crossover junction endodeoxyribonuclease RuvC (191 aa).

Catalysis depends on residues D7, E67, and D140. Positions 7, 67, and 140 each coordinate Mg(2+).

The protein belongs to the RuvC family. As to quaternary structure, homodimer which binds Holliday junction (HJ) DNA. The HJ becomes 2-fold symmetrical on binding to RuvC with unstacked arms; it has a different conformation from HJ DNA in complex with RuvA. In the full resolvosome a probable DNA-RuvA(4)-RuvB(12)-RuvC(2) complex forms which resolves the HJ. Mg(2+) serves as cofactor.

Its subcellular location is the cytoplasm. The catalysed reaction is Endonucleolytic cleavage at a junction such as a reciprocal single-stranded crossover between two homologous DNA duplexes (Holliday junction).. The RuvA-RuvB-RuvC complex processes Holliday junction (HJ) DNA during genetic recombination and DNA repair. Endonuclease that resolves HJ intermediates. Cleaves cruciform DNA by making single-stranded nicks across the HJ at symmetrical positions within the homologous arms, yielding a 5'-phosphate and a 3'-hydroxyl group; requires a central core of homology in the junction. The consensus cleavage sequence is 5'-(A/T)TT(C/G)-3'. Cleavage occurs on the 3'-side of the TT dinucleotide at the point of strand exchange. HJ branch migration catalyzed by RuvA-RuvB allows RuvC to scan DNA until it finds its consensus sequence, where it cleaves and resolves the cruciform DNA. The sequence is that of Crossover junction endodeoxyribonuclease RuvC from Pelodictyon phaeoclathratiforme (strain DSM 5477 / BU-1).